Consider the following 303-residue polypeptide: MNIDDLDFRHLVLLDALLKRHSVSAAARELDLPQPTASHGLARLRKALGDPLLVRARDGMEPTPRAEAIAGVVQQLLELRRDLAEGGQTFSPDRLKREFIIAGSDIAHLVVLTALHSAARFEAPHTSYRALTLSGDEMVSALETGHVDIAVGAYPSLVAGIKTQRLYQEEYLCFGKEGHPFIKSGETDDFMAADHIVVSTKGMAHAHRAVERALLDKIHPDRIRIVASSFLVALAACFESDLILTAPARVIGRLAEVYGLRAVRPPILMEAFEVRQYWHARNQDDPPHRWLRQLLHKVLSARM.

An HTH lysR-type domain is found at 6 to 63 (LDFRHLVLLDALLKRHSVSAAARELDLPQPTASHGLARLRKALGDPLLVRARDGMEPT). The H-T-H motif DNA-binding region spans 23–42 (VSAAARELDLPQPTASHGLA).

This sequence belongs to the LysR transcriptional regulatory family.

Its function is as follows. Positively regulates the transcription of the linD and linE genes that are involved in gamma-hexachlorocyclohexane (gamma-HCH or lindane) degradation. This degradation pathway allows S.japonicum UT26 to grow on gamma-HCH as the sole source of carbon and energy. The chain is HTH-type transcriptional regulator LinR (linR) from Sphingobium indicum (strain DSM 16413 / CCM 7287 / MTCC 6362 / UT26 / NBRC 101211 / UT26S) (Sphingobium japonicum).